A 642-amino-acid chain; its full sequence is Threonine--tRNA ligase (642 aa).

In terms of domain architecture, TGS spans 1–61; the sequence is MPVITLPDGS…HEDASLSIIT (61 aa). Positions 243-534 are catalytic; that stretch reads DHRKIGKQLD…LIEEYAGRFP (292 aa). Cysteine 334, histidine 385, and histidine 511 together coordinate Zn(2+).

The protein belongs to the class-II aminoacyl-tRNA synthetase family. As to quaternary structure, homodimer. Requires Zn(2+) as cofactor.

Its subcellular location is the cytoplasm. It catalyses the reaction tRNA(Thr) + L-threonine + ATP = L-threonyl-tRNA(Thr) + AMP + diphosphate + H(+). Functionally, catalyzes the attachment of threonine to tRNA(Thr) in a two-step reaction: L-threonine is first activated by ATP to form Thr-AMP and then transferred to the acceptor end of tRNA(Thr). Also edits incorrectly charged L-seryl-tRNA(Thr). The protein is Threonine--tRNA ligase of Shewanella amazonensis (strain ATCC BAA-1098 / SB2B).